The sequence spans 291 residues: Pantothenate synthetase (291 aa).

30-37 (MGNLHEGH) provides a ligand contact to ATP. The active-site Proton donor is the His37. Gln61 contributes to the (R)-pantoate binding site. Beta-alanine is bound at residue Gln61. Residue 149 to 152 (GEKD) coordinates ATP. Residue Gln155 coordinates (R)-pantoate. ATP is bound by residues Val178 and 186 to 189 (MSSR).

This sequence belongs to the pantothenate synthetase family. In terms of assembly, homodimer.

It is found in the cytoplasm. It catalyses the reaction (R)-pantoate + beta-alanine + ATP = (R)-pantothenate + AMP + diphosphate + H(+). It functions in the pathway cofactor biosynthesis; (R)-pantothenate biosynthesis; (R)-pantothenate from (R)-pantoate and beta-alanine: step 1/1. Functionally, catalyzes the condensation of pantoate with beta-alanine in an ATP-dependent reaction via a pantoyl-adenylate intermediate. This chain is Pantothenate synthetase, found in Aliivibrio fischeri (strain ATCC 700601 / ES114) (Vibrio fischeri).